The sequence spans 877 residues: DNA polymerase I (877 aa).

In terms of domain architecture, 5'-3' exonuclease spans T180–K272. The 3'-5' exonuclease domain maps to F312–I468.

This sequence belongs to the DNA polymerase type-A family. Single-chain monomer with multiple functions.

It catalyses the reaction DNA(n) + a 2'-deoxyribonucleoside 5'-triphosphate = DNA(n+1) + diphosphate. In terms of biological role, in addition to polymerase activity, this DNA polymerase exhibits 3'-5' and 5'-3' exonuclease activity. This is DNA polymerase I (polA) from Lactococcus lactis subsp. cremoris (strain MG1363).